Reading from the N-terminus, the 499-residue chain is Potassium channel subfamily K member 5 (499 aa).

Over 1 to 7 (MVDRGPL) the chain is Cytoplasmic. The chain crosses the membrane as a helical span at residues 8-26 (LTSAIIFYLAIGAAIFEVL). Asn-77 is a glycosylation site (N-linked (GlcNAc...) asparagine). The segment at residues 85–112 (WPNAMIFAATVITTIGYGNVAPKTPAGR) is an intramembrane region (pore-forming). Positions 98, 99, 100, and 101 each coordinate K(+). The tract at residues 98 to 103 (TIGYGN) is selectivity filter 1. Residues 113–133 (LFCVFYGLFGVPLCLTWISAL) form a helical membrane-spanning segment. The Cytoplasmic portion of the chain corresponds to 134-157 (GKFFGGRAKRLGQFLTKRGVSLRK). Residues 158–180 (AQITCTVIFIVWGVLVHLVIPPF) form a helical membrane-spanning segment. Positions 190 to 215 (YIEGLYYSFITISTIGFGDFVAGVNP) form an intramembrane region, pore-forming. Positions 203, 204, 205, and 206 each coordinate K(+). Residues 203-208 (TIGFGD) form a selectivity filter 2 region. Residues 230–250 (WIYLGLAWLSLFVNWKVSMFV) traverse the membrane as a helical segment. Over 251-325 (EVHKAIKKRR…SGGGETGPGP (75 aa)) the chain is Cytoplasmic. Disordered regions lie at residues 312–335 (AMKT…GGLP), 360–388 (QTLR…SPAP), and 428–499 (GLSD…PKGT). The segment covering 316-334 (SGGGETGPGPGLGPQGGGL) has biased composition (gly residues). The segment covering 370–382 (RSPDEEAVARAPE) has biased composition (basic and acidic residues). A Phosphoserine modification is found at Ser-371. A compositionally biased stretch (low complexity) spans 466 to 480 (SSSESTFTSTESELS).

This sequence belongs to the two pore domain potassium channel (TC 1.A.1.8) family. Homodimer; disulfide-linked. Heterodimer with KCNK16 and KCNK17. As to expression, abundant expression in kidney, also detected in liver, placenta and small intestine. In the kidney, expression is restricted to the distal tubules and collecting ducts. Not expressed in proximal tubules or glomeruli. Expressed in pancreas, in both endocrine (alpha, beta, gamma, delta, and epsilon) and exocrine (acinar and ductal) cells.

The protein resides in the membrane. It carries out the reaction K(+)(in) = K(+)(out). Its activity is regulated as follows. The channel conductance is stimulated by extracellular alkaline pH. Inhibited by quinine, quinidine and external acidification. Its function is as follows. K(+) channel that conducts voltage-dependent outward rectifying currents upon membrane depolarization. Voltage sensing is coupled to K(+) electrochemical gradient in an 'ion flux gating' mode where outward but not inward ion flow opens the gate. Homo- and heterodimerizes to form functional channels with distinct regulatory and gating properties. This Homo sapiens (Human) protein is Potassium channel subfamily K member 5.